The primary structure comprises 162 residues: RNA replication protein (162 aa).

Belongs to the potexvirus/carlavirus RNA replication protein family.

The enzyme catalyses RNA(n) + a ribonucleoside 5'-triphosphate = RNA(n+1) + diphosphate. It catalyses the reaction ATP + H2O = ADP + phosphate + H(+). Its function is as follows. RNA replication. The central part of this protein possibly functions as an ATP-binding helicase. The protein is RNA replication protein of Lilium formosanum.